The primary structure comprises 266 residues: SQVGMVLNLDKCIGCHTCSVTCKEGMEYAWFNNVESKLCEHCLNPACVATCPSGAIYKREEDGIVLIDQDKLCISGCPYKCIFCYPRIESGQPTVCSETCVGRYLGVLLYDADRIEEAASTEHETDLLYERQLDVFLDPNDPKVIEQAIKQGIPQNVIDAAQRSPVYKLALPLHPEYRAADAGELGSNGILPDVESLRMLSAGDTGPVIRSQTVEGVTDTRALEEVGLTEAQAQEMYRYLAIANYEDRFVVPSSHRIDAINITEVR.

4Fe-4S ferredoxin-type domains are found at residues V3–N32 and W30–E61. [4Fe-4S] cluster-binding residues include C12, C15, C18, C22, C39, C42, and C47. Positions 51 and 73 each coordinate [3Fe-4S] cluster. [4Fe-4S] cluster-binding residues include C77, C81, C84, C96, and C100.

In terms of assembly, heterotrimer composed of an alpha, a beta and a gamma chain. Alpha and beta are catalytic chains; gamma chains are involved in binding the enzyme complex to the cytoplasmic membrane. Requires [4Fe-4S] cluster as cofactor. It depends on [3Fe-4S] cluster as a cofactor.

It localises to the cell membrane. The protein resides in the cytoplasm. The enzyme catalyses nitrate + a quinol = a quinone + nitrite + H2O. With respect to regulation, inhibited by micromolar concentrations of azide. Its function is as follows. The nitrate reductase enzyme complex allows Bradyrhizobium sp. USDA 3045 to use nitrate as an electron acceptor during anaerobic growth. The beta chain is an electron transfer unit containing four cysteine clusters involved in the formation of iron-sulfur centers. Electrons are transferred from the gamma chain to the molybdenum cofactor of the alpha subunit. The protein is Respiratory nitrate reductase beta chain (narH) of Bradyrhizobium sp.